We begin with the raw amino-acid sequence, 423 residues long: UDP-N-acetylglucosamine 1-carboxyvinyltransferase 1 (423 aa).

Phosphoenolpyruvate is bound at residue 23–24; sequence KN. Arg96 is a binding site for UDP-N-acetyl-alpha-D-glucosamine. Residue Cys120 is the Proton donor of the active site. Cys120 bears the 2-(S-cysteinyl)pyruvic acid O-phosphothioketal mark. UDP-N-acetyl-alpha-D-glucosamine-binding positions include 125–129, Asp309, and Val331; that span reads RPIDL.

The protein belongs to the EPSP synthase family. MurA subfamily.

It is found in the cytoplasm. The catalysed reaction is phosphoenolpyruvate + UDP-N-acetyl-alpha-D-glucosamine = UDP-N-acetyl-3-O-(1-carboxyvinyl)-alpha-D-glucosamine + phosphate. The protein operates within cell wall biogenesis; peptidoglycan biosynthesis. Its function is as follows. Cell wall formation. Adds enolpyruvyl to UDP-N-acetylglucosamine. This is UDP-N-acetylglucosamine 1-carboxyvinyltransferase 1 from Streptococcus thermophilus (strain ATCC BAA-250 / LMG 18311).